The sequence spans 96 residues: 2Fe-2S ferredoxin-5 (96 aa).

A 2Fe-2S ferredoxin-type domain is found at 2–96; the sequence is PKVIVANINA…GKGDVVIYLP (95 aa). Positions 36, 42, 45, and 81 each coordinate [2Fe-2S] cluster.

Belongs to the adrenodoxin/putidaredoxin family. The cofactor is [2Fe-2S] cluster.

Its function is as follows. May be involved in the assembly of iron-sulfur clusters (Isc-Fd). The polypeptide is 2Fe-2S ferredoxin-5 (fdx5) (Aquifex aeolicus (strain VF5)).